A 267-amino-acid polypeptide reads, in one-letter code: Kafirin PSK8 (267 aa).

An N-terminal signal peptide occupies residues 1–19 (TKIFALLALHALLVSGTTA).

This sequence belongs to the zein family.

Functionally, major seed storage prolamin. The polypeptide is Kafirin PSK8 (Sorghum bicolor (Sorghum)).